The chain runs to 699 residues: Elongation factor G (699 aa).

The tr-type G domain occupies 8–283; it reads EHIRNIGICA…AVVDFLPSPI (276 aa). GTP-binding positions include 17–24, 81–85, and 135–138; these read AHIDAGKT, DTPGH, and NKMD.

The protein belongs to the TRAFAC class translation factor GTPase superfamily. Classic translation factor GTPase family. EF-G/EF-2 subfamily.

It localises to the cytoplasm. Functionally, catalyzes the GTP-dependent ribosomal translocation step during translation elongation. During this step, the ribosome changes from the pre-translocational (PRE) to the post-translocational (POST) state as the newly formed A-site-bound peptidyl-tRNA and P-site-bound deacylated tRNA move to the P and E sites, respectively. Catalyzes the coordinated movement of the two tRNA molecules, the mRNA and conformational changes in the ribosome. This chain is Elongation factor G, found in Rickettsia africae (strain ESF-5).